The chain runs to 152 residues: Lipoprotein signal peptidase (152 aa).

3 helical membrane passes run 5–25 (LFVL…FWIV), 61–81 (WFFV…LATH), and 84–104 (LNIW…GNFI). Active-site residues include D114 and D130. The chain crosses the membrane as a helical span at residues 125-145 (IFNVADSYLTVGVILLVICLW).

Belongs to the peptidase A8 family.

Its subcellular location is the cell membrane. It catalyses the reaction Release of signal peptides from bacterial membrane prolipoproteins. Hydrolyzes -Xaa-Yaa-Zaa-|-(S,diacylglyceryl)Cys-, in which Xaa is hydrophobic (preferably Leu), and Yaa (Ala or Ser) and Zaa (Gly or Ala) have small, neutral side chains.. It functions in the pathway protein modification; lipoprotein biosynthesis (signal peptide cleavage). In terms of biological role, this protein specifically catalyzes the removal of signal peptides from prolipoproteins. The sequence is that of Lipoprotein signal peptidase from Streptococcus pyogenes serotype M3 (strain ATCC BAA-595 / MGAS315).